The primary structure comprises 584 residues: AAA ATPase forming ring-shaped complexes (584 aa).

Residues 10–96 (AQSGTEHAEQ…LKENLDAVTH (87 aa)) adopt a coiled-coil conformation. The disordered stretch occupies residues 40 to 66 (HQLQSAQRHAAGLSERRRAAEAQTQTA). Residue 292-297 (GTGKTM) coordinates ATP.

It belongs to the AAA ATPase family. Homohexamer. Assembles into a hexameric ring structure.

The polypeptide is AAA ATPase forming ring-shaped complexes (Micrococcus luteus (strain ATCC 4698 / DSM 20030 / JCM 1464 / CCM 169 / CCUG 5858 / IAM 1056 / NBRC 3333 / NCIMB 9278 / NCTC 2665 / VKM Ac-2230) (Micrococcus lysodeikticus)).